The chain runs to 228 residues: Uracil-DNA glycosylase (228 aa).

Asp-64 acts as the Proton acceptor in catalysis.

The protein belongs to the uracil-DNA glycosylase (UDG) superfamily. UNG family.

It localises to the cytoplasm. It catalyses the reaction Hydrolyzes single-stranded DNA or mismatched double-stranded DNA and polynucleotides, releasing free uracil.. In terms of biological role, excises uracil residues from the DNA which can arise as a result of misincorporation of dUMP residues by DNA polymerase or due to deamination of cytosine. The polypeptide is Uracil-DNA glycosylase (Yersinia enterocolitica serotype O:8 / biotype 1B (strain NCTC 13174 / 8081)).